The following is a 273-amino-acid chain: Glutamate 5-kinase (273 aa).

Lys-15 serves as a coordination point for ATP. The substrate site is built by Ser-55, Asp-142, and Asn-158. ATP-binding positions include 178–179 and 220–226; these read SD and TGGMLSK.

The protein belongs to the glutamate 5-kinase family.

It localises to the cytoplasm. It carries out the reaction L-glutamate + ATP = L-glutamyl 5-phosphate + ADP. It functions in the pathway amino-acid biosynthesis; L-proline biosynthesis; L-glutamate 5-semialdehyde from L-glutamate: step 1/2. Functionally, catalyzes the transfer of a phosphate group to glutamate to form L-glutamate 5-phosphate. The polypeptide is Glutamate 5-kinase (Streptococcus pyogenes serotype M3 (strain ATCC BAA-595 / MGAS315)).